A 208-amino-acid chain; its full sequence is Uracil phosphoribosyltransferase (208 aa).

Residues R78, R103, and 130–138 contribute to the 5-phospho-alpha-D-ribose 1-diphosphate site; that span reads DPMLATGGS. Residues I193 and 198-200 each bind uracil; that span reads GDA. D199 is a binding site for 5-phospho-alpha-D-ribose 1-diphosphate.

This sequence belongs to the UPRTase family. It depends on Mg(2+) as a cofactor.

It carries out the reaction UMP + diphosphate = 5-phospho-alpha-D-ribose 1-diphosphate + uracil. It participates in pyrimidine metabolism; UMP biosynthesis via salvage pathway; UMP from uracil: step 1/1. Its activity is regulated as follows. Allosterically activated by GTP. Catalyzes the conversion of uracil and 5-phospho-alpha-D-ribose 1-diphosphate (PRPP) to UMP and diphosphate. In Trichlorobacter lovleyi (strain ATCC BAA-1151 / DSM 17278 / SZ) (Geobacter lovleyi), this protein is Uracil phosphoribosyltransferase.